A 956-amino-acid chain; its full sequence is Bifunctional glutamine synthetase adenylyltransferase/adenylyl-removing enzyme (956 aa).

Residues 1-441 (MLPLSTPLLA…IFTQLIGDDS (441 aa)) form an adenylyl removase region. The tract at residues 450–956 (HVPFKSLWLE…RRSWQQWLGE (507 aa)) is adenylyl transferase.

Belongs to the GlnE family. It depends on Mg(2+) as a cofactor.

It carries out the reaction [glutamine synthetase]-O(4)-(5'-adenylyl)-L-tyrosine + phosphate = [glutamine synthetase]-L-tyrosine + ADP. It catalyses the reaction [glutamine synthetase]-L-tyrosine + ATP = [glutamine synthetase]-O(4)-(5'-adenylyl)-L-tyrosine + diphosphate. In terms of biological role, involved in the regulation of glutamine synthetase GlnA, a key enzyme in the process to assimilate ammonia. When cellular nitrogen levels are high, the C-terminal adenylyl transferase (AT) inactivates GlnA by covalent transfer of an adenylyl group from ATP to specific tyrosine residue of GlnA, thus reducing its activity. Conversely, when nitrogen levels are low, the N-terminal adenylyl removase (AR) activates GlnA by removing the adenylyl group by phosphorolysis, increasing its activity. The regulatory region of GlnE binds the signal transduction protein PII (GlnB) which indicates the nitrogen status of the cell. In Photorhabdus laumondii subsp. laumondii (strain DSM 15139 / CIP 105565 / TT01) (Photorhabdus luminescens subsp. laumondii), this protein is Bifunctional glutamine synthetase adenylyltransferase/adenylyl-removing enzyme.